The primary structure comprises 561 residues: uncharacterized protein (561 aa).

The next 6 helical transmembrane spans lie at 27-49 (ILEFLAAQPLLTLALILAVGLLI), 54-71 (FFGISLGAAAVLFVALAL), 83-105 (LVYQLGLAMFVYAIGLSAGSEFF), 115-137 (LTLFMIGLLMLMMAVAYGIIKLF), 142-162 (IIGAGMFAGALSSTPGMAAMV), and 177-199 (VVGYSLAYPGAVIGSILVAAIGA). Positions 292–373 (QQDVPIEDTD…MSEVRRFLGD (82 aa)) constitute an RCK C-terminal domain. The next 4 helical transmembrane spans lie at 383-405 (LMPFAFGLVIGLAIGVIPIPLPG), 409-428 (LSLGFGGGPIVAGLILGALN), 441-463 (ASRTISTFGLAIFLAGVGTSAGV), and 478-500 (IAGGFIVTISSALVCALVCMPLF).

It belongs to the AAE transporter (TC 2.A.81) family.

Its subcellular location is the cell membrane. This is an uncharacterized protein from Corynebacterium diphtheriae (strain ATCC 700971 / NCTC 13129 / Biotype gravis).